The chain runs to 252 residues: Probable transcriptional regulatory protein Lxx10750 (252 aa).

The protein belongs to the TACO1 family.

It is found in the cytoplasm. This chain is Probable transcriptional regulatory protein Lxx10750, found in Leifsonia xyli subsp. xyli (strain CTCB07).